The sequence spans 241 residues: ATP synthase subunit a (241 aa).

A run of 5 helical transmembrane segments spans residues 30 to 50 (GQVF…ISLG), 91 to 111 (FIGT…LIPW), 128 to 148 (INTT…AGLS), 193 to 213 (LVVG…VMFL), and 214 to 234 (GLFT…YYIG).

It belongs to the ATPase A chain family. In terms of assembly, F-type ATPases have 2 components, CF(1) - the catalytic core - and CF(0) - the membrane proton channel. CF(1) has five subunits: alpha(3), beta(3), gamma(1), delta(1), epsilon(1). CF(0) has four main subunits: a, b, b' and c.

It localises to the cellular thylakoid membrane. Key component of the proton channel; it plays a direct role in the translocation of protons across the membrane. The chain is ATP synthase subunit a from Prochlorococcus marinus (strain MIT 9215).